Here is a 489-residue protein sequence, read N- to C-terminus: Coiled-coil domain-containing protein 77 (489 aa).

At S38 the chain carries Phosphoserine. Coiled-coil stretches lie at residues 57-120 (SQEL…QVCL) and 212-487 (ERHQ…NALR).

The sequence is that of Coiled-coil domain-containing protein 77 (Ccdc77) from Mus musculus (Mouse).